The primary structure comprises 509 residues: ATP synthase subunit alpha (509 aa).

Position 169-176 (169-176 (GDRQTGKT)) interacts with ATP.

Belongs to the ATPase alpha/beta chains family. As to quaternary structure, F-type ATPases have 2 components, CF(1) - the catalytic core - and CF(0) - the membrane proton channel. CF(1) has five subunits: alpha(3), beta(3), gamma(1), delta(1), epsilon(1). CF(0) has three main subunits: a(1), b(2) and c(9-12). The alpha and beta chains form an alternating ring which encloses part of the gamma chain. CF(1) is attached to CF(0) by a central stalk formed by the gamma and epsilon chains, while a peripheral stalk is formed by the delta and b chains.

The protein resides in the cell inner membrane. The catalysed reaction is ATP + H2O + 4 H(+)(in) = ADP + phosphate + 5 H(+)(out). Functionally, produces ATP from ADP in the presence of a proton gradient across the membrane. The alpha chain is a regulatory subunit. This chain is ATP synthase subunit alpha, found in Paramagnetospirillum magneticum (strain ATCC 700264 / AMB-1) (Magnetospirillum magneticum).